The primary structure comprises 417 residues: MTKTITVAHIQYDFKAVLEENDENDDEFYINVDKNLNEIKEHKIVVLGNSRGVDAGKGNTFEKVGSHLYKARLDGHDFLFNTIIRDGSKMLKRADYTAVDTAKLQMRRFILGTTEGDIKVLDSNFNLQREIDQAHVSEITKLKFFPSGEALISSSQDMQLKIWSVKDGSNPRTLIGHRATVTDIAIIDRGRNVLSASLDGTIRLWECGTGTTIHTFNRKENPHDGVNSIALFVGTDRQLHEISTSKKNNLEFGTYGKYVIAGHVSGVITVHNVFSKEQTIQLPSKFTCSCNSLTVDGNNANYIYAGYENGMLAQWDLRSPECPVGEFLINEGTPINNVYFAAGALFVSSGFDTSIKLDIISDPESERPAIEFETPTFLVSNDDEVSQFCYVSDDESNGEVLEVGKNNFCALYNLSNP.

WD repeat units follow at residues 134 to 173, 176 to 215, 242 to 281, 285 to 325, 330 to 371, and 380 to 416; these read AHVS…NPRT, GHRA…TIHT, ISTS…QTIQ, KFTC…CPVG, NEGT…PAIE, and SNDD…NLSN.

This sequence belongs to the WD repeat PAAF1/RPN14 family. Associates with the 19S proteasome regulatory particle (RP). Interacts directly with RPT5 and RPT6.

It localises to the cytoplasm. The protein localises to the nucleus. Functionally, acts as a regulatory subunit of the 26 proteasome which is involved in the ATP-dependent degradation of ubiquitinated proteins. Is not a genuine component of the 26S proteasome, but an auxiliary factor that interacts with the proteasomal ATPase of 19S regulatory particle (RP). Acts as a chaperone which regulates the highly structured assembly of the 19S regulatory particle. Involved in the substrate specificity of the 26S proteasome and is especially involved in the degradation of ubiquitinated GCN4. May contribute to the stability of the 26S proteasome in some stress conditions. The chain is 26S proteasome regulatory subunit RPN14 (RPN14) from Saccharomyces cerevisiae (strain ATCC 204508 / S288c) (Baker's yeast).